The following is a 364-amino-acid chain: Alanine racemase (364 aa).

Catalysis depends on K34, which acts as the Proton acceptor; specific for D-alanine. K34 carries the N6-(pyridoxal phosphate)lysine modification. Residue R129 coordinates substrate. Y259 (proton acceptor; specific for L-alanine) is an active-site residue. M307 is a binding site for substrate.

It belongs to the alanine racemase family. It depends on pyridoxal 5'-phosphate as a cofactor.

The catalysed reaction is L-alanine = D-alanine. It participates in amino-acid biosynthesis; D-alanine biosynthesis; D-alanine from L-alanine: step 1/1. Functionally, catalyzes the interconversion of L-alanine and D-alanine. May also act on other amino acids. This Coxiella burnetii (strain RSA 331 / Henzerling II) protein is Alanine racemase (alr).